The chain runs to 177 residues: dCTP deaminase, dUMP-forming (177 aa).

DCTP is bound by residues 98–103 (RSSVGR), Asn-110, 115–118 (DPGF), 123–125 (TLE), Gln-144, 157–160 (YQGK), and Gln-164. The active-site Proton donor/acceptor is Glu-125.

Belongs to the dCTP deaminase family. As to quaternary structure, homotrimer. Requires Mg(2+) as cofactor.

The catalysed reaction is dCTP + 2 H2O = dUMP + NH4(+) + diphosphate. It participates in pyrimidine metabolism; dUMP biosynthesis; dUMP from dCTP: step 1/1. With respect to regulation, inhibited by dTTP. Functionally, bifunctional enzyme that catalyzes both the deamination of dCTP to dUTP and the hydrolysis of dUTP to dUMP without releasing the toxic dUTP intermediate. In Halalkalibacterium halodurans (strain ATCC BAA-125 / DSM 18197 / FERM 7344 / JCM 9153 / C-125) (Bacillus halodurans), this protein is dCTP deaminase, dUMP-forming.